The primary structure comprises 471 residues: Replication factor C large subunit (471 aa).

Residue Gly-44–Thr-51 participates in ATP binding. Basic and acidic residues predominate over residues Arg-422 to Glu-431. Residues Arg-422–Phe-471 form a disordered region. Positions Asn-442–Gly-460 are enriched in acidic residues.

Belongs to the activator 1 small subunits family. RfcL subfamily. In terms of assembly, heteromultimer composed of small subunits (RfcS) and large subunits (RfcL).

Functionally, part of the RFC clamp loader complex which loads the PCNA sliding clamp onto DNA. The polypeptide is Replication factor C large subunit (Halobacterium salinarum (strain ATCC 29341 / DSM 671 / R1)).